Consider the following 317-residue polypeptide: Ribosomal protein L11 methyltransferase (317 aa).

The S-adenosyl-L-methionine site is built by T158, G179, D201, and N244.

The protein belongs to the methyltransferase superfamily. PrmA family.

It is found in the cytoplasm. The enzyme catalyses L-lysyl-[protein] + 3 S-adenosyl-L-methionine = N(6),N(6),N(6)-trimethyl-L-lysyl-[protein] + 3 S-adenosyl-L-homocysteine + 3 H(+). Its function is as follows. Methylates ribosomal protein L11. This is Ribosomal protein L11 methyltransferase from Streptococcus pyogenes serotype M28 (strain MGAS6180).